We begin with the raw amino-acid sequence, 572 residues long: Proline--tRNA ligase (572 aa).

It belongs to the class-II aminoacyl-tRNA synthetase family. ProS type 1 subfamily. Homodimer.

Its subcellular location is the cytoplasm. The enzyme catalyses tRNA(Pro) + L-proline + ATP = L-prolyl-tRNA(Pro) + AMP + diphosphate. Functionally, catalyzes the attachment of proline to tRNA(Pro) in a two-step reaction: proline is first activated by ATP to form Pro-AMP and then transferred to the acceptor end of tRNA(Pro). As ProRS can inadvertently accommodate and process non-cognate amino acids such as alanine and cysteine, to avoid such errors it has two additional distinct editing activities against alanine. One activity is designated as 'pretransfer' editing and involves the tRNA(Pro)-independent hydrolysis of activated Ala-AMP. The other activity is designated 'posttransfer' editing and involves deacylation of mischarged Ala-tRNA(Pro). The misacylated Cys-tRNA(Pro) is not edited by ProRS. The chain is Proline--tRNA ligase from Buchnera aphidicola subsp. Acyrthosiphon pisum (strain APS) (Acyrthosiphon pisum symbiotic bacterium).